A 121-amino-acid polypeptide reads, in one-letter code: Apoptin (121 aa).

2 disordered regions span residues 1 to 28 and 57 to 121; these read MNALQEDTPPGPSTVFRPPTSSRPLETP and LRSA…CIRL. A compositionally biased stretch (polar residues) spans 58–70; the sequence is RSATADNSESTGF. The segment covering 88–102 has biased composition (basic and acidic residues); the sequence is RSCDPSEYRVSELKE.

The protein belongs to the gyrovirus apoptin family.

It localises to the host nucleus. In terms of biological role, may act as transcriptional regulator. Induces apoptosis in infected cells. Element of infectious replication cycle. In Gallus gallus (Chicken), this protein is Apoptin (VP3).